A 304-amino-acid chain; its full sequence is Homoserine O-acetyltransferase (304 aa).

Catalysis depends on Cys142, which acts as the Acyl-thioester intermediate. 2 residues coordinate substrate: Lys163 and Ser191. His234 functions as the Proton acceptor in the catalytic mechanism. Glu236 is an active-site residue. Arg248 provides a ligand contact to substrate.

The protein belongs to the MetA family.

The protein resides in the cytoplasm. The enzyme catalyses L-homoserine + acetyl-CoA = O-acetyl-L-homoserine + CoA. It functions in the pathway amino-acid biosynthesis; L-methionine biosynthesis via de novo pathway; O-acetyl-L-homoserine from L-homoserine: step 1/1. In terms of biological role, transfers an acetyl group from acetyl-CoA to L-homoserine, forming acetyl-L-homoserine. This chain is Homoserine O-acetyltransferase, found in Thermotoga petrophila (strain ATCC BAA-488 / DSM 13995 / JCM 10881 / RKU-1).